The sequence spans 483 residues: Glutamate--tRNA ligase (483 aa).

The 'HIGH' region signature appears at 11–21; the sequence is PSPTGHLHIGN. Zn(2+)-binding residues include Cys-108, Cys-110, Cys-135, and His-137. A 'KMSKS' region motif is present at residues 252-256; it reads KLSKR. Lys-255 lines the ATP pocket.

It belongs to the class-I aminoacyl-tRNA synthetase family. Glutamate--tRNA ligase type 1 subfamily. In terms of assembly, monomer. It depends on Zn(2+) as a cofactor.

It is found in the cytoplasm. It carries out the reaction tRNA(Glu) + L-glutamate + ATP = L-glutamyl-tRNA(Glu) + AMP + diphosphate. Catalyzes the attachment of glutamate to tRNA(Glu) in a two-step reaction: glutamate is first activated by ATP to form Glu-AMP and then transferred to the acceptor end of tRNA(Glu). This Bacillus pumilus (strain SAFR-032) protein is Glutamate--tRNA ligase.